A 431-amino-acid polypeptide reads, in one-letter code: MSPSVEETTSVTESIMFAIVSFKHMGPFEGYSMSADRAASDLLIGMFGSVSLVNLLTIIGCLWVLRVTRPPVSVMIFTWNLVLSQFFSILATMLSKGIMLRGALNLSLCRLVLFVDDVGLYSTALFFLFLILDRLSAISYGRDLWHHETRENAGVALYAVAFAWVLSIVAAVPTAATGSLDYRWLGCQIPIQYAAVDLTIKMWFLLGAPMIAVLANVVELAYSDRRDHVWSYVGRVCTFYVTCLMLFVPYYCFRVLRGVLQPASAAGTGFGIMDYVELATRTLLTMRLGILPLFIIAFFSREPTKDLDDSFDYLVERCQQSCHGHFVRRLVQALKRAMYSVELAVCYFSTSVRDVAEAVKKSSSRCYADATSAAVVVTTTTSEKATLVEHAEGMASEMCPGTTIDVSAESSSVLCTDGENTVASDATVTAL.

2 consecutive transmembrane segments (helical) span residues 42–62 (LLIG…IGCL) and 74–94 (VMIF…ATML). A glycan (N-linked (GlcNAc...) asparagine; by host) is linked at Asn-105. Helical transmembrane passes span 111–131 (LVLF…LFLI), 153–173 (AGVA…AAVP), 202–222 (MWFL…ELAY), 236–256 (VCTF…FRVL), and 279–299 (ATRT…IAFF).

The protein localises to the membrane. This is an uncharacterized protein from Homo sapiens (Human).